Reading from the N-terminus, the 191-residue chain is Small ribosomal subunit protein uS11m (191 aa).

Positions 37–62 (PRLEDSAARQNTEREAAPSRFSLYPP) are disordered. A compositionally biased stretch (basic and acidic residues) spans 38–53 (RLEDSAARQNTEREAA).

It belongs to the universal ribosomal protein uS11 family. In terms of assembly, component of the mitochondrial ribosome small subunit (28S) which comprises a 12S rRNA and about 30 distinct proteins.

Its subcellular location is the mitochondrion. The chain is Small ribosomal subunit protein uS11m (Mrps11) from Mus musculus (Mouse).